Reading from the N-terminus, the 408-residue chain is LL-diaminopimelate aminotransferase (408 aa).

Substrate is bound by residues Tyr-15 and Gly-42. Pyridoxal 5'-phosphate is bound by residues Tyr-72, 108 to 109 (SK), Tyr-132, Asn-187, Tyr-218, and 246 to 248 (SFS). Substrate-binding residues include Lys-109, Tyr-132, and Asn-187. Lys-249 carries the post-translational modification N6-(pyridoxal phosphate)lysine. Arg-257 and Asn-291 together coordinate pyridoxal 5'-phosphate. Positions 291 and 387 each coordinate substrate.

It belongs to the class-I pyridoxal-phosphate-dependent aminotransferase family. LL-diaminopimelate aminotransferase subfamily. In terms of assembly, homodimer. The cofactor is pyridoxal 5'-phosphate.

The catalysed reaction is (2S,6S)-2,6-diaminopimelate + 2-oxoglutarate = (S)-2,3,4,5-tetrahydrodipicolinate + L-glutamate + H2O + H(+). The protein operates within amino-acid biosynthesis; L-lysine biosynthesis via DAP pathway; LL-2,6-diaminopimelate from (S)-tetrahydrodipicolinate (aminotransferase route): step 1/1. Functionally, involved in the synthesis of meso-diaminopimelate (m-DAP or DL-DAP), required for both lysine and peptidoglycan biosynthesis. Catalyzes the direct conversion of tetrahydrodipicolinate to LL-diaminopimelate. This Prochlorococcus marinus (strain NATL2A) protein is LL-diaminopimelate aminotransferase.